We begin with the raw amino-acid sequence, 142 residues long: Ctenidin-3 (142 aa).

The first 19 residues, 1–19 (MKHLIPLIVMASVVLAVYA), serve as a signal peptide directing secretion. Tyr139 carries the post-translational modification Tyrosine amide.

In terms of tissue distribution, expressed in hemocytes (at protein level).

The protein resides in the secreted. In terms of biological role, antimicrobial protein with bacteriostatic activity against the Gram-negative bacterium E.coli, and very weak activity against the Gram-positive bacterium S.aureus. Lacks activity against the yeast C.albicans. In Cupiennius salei (American wandering spider), this protein is Ctenidin-3.